We begin with the raw amino-acid sequence, 287 residues long: uncharacterized protein (287 aa).

Belongs to the AllH family.

This is an uncharacterized protein from Escherichia coli (strain K12).